The chain runs to 172 residues: Ly6/PLAUR domain-containing protein 6B (172 aa).

The first 25 residues, M1–A25, serve as a signal peptide directing secretion. The 92-residue stretch at F46 to A137 folds into the UPAR/Ly6 domain. The segment at F46–A140 is sufficient for inhibiting alpha-7 nAChR currents. Cystine bridges form between C48-C76, C51-C60, C69-C95, C101-C120, C106-C117, and C121-C126. Residue S148 is the site of GPI-anchor amidated serine attachment. The propeptide at G149–L172 is removed in mature form.

Its subcellular location is the cell membrane. Likely acts as a modulator of nicotinic acetylcholine receptors (nAChRs) activity. In vitro acts on nAChRs in a subtype- and stoichiometry-dependent manner. Modulates specifically alpha-3(3):beta-4(2) nAChRs by enhancing the sensitivity to ACh, decreasing ACh-induced maximal current response and increasing the rate of desensitization to ACh; has no effect on alpha-7 homomeric nAChRs; modulates alpha-3(2):alpha-5:beta-4(2) nAChRs in the context of CHRNA5/alpha-5 variant Asn-398 but not its wild-type sequence. However, according to another report in vitro it can weakly inhibits alpha-7 nAChRs. The chain is Ly6/PLAUR domain-containing protein 6B (Lypd6b) from Mus musculus (Mouse).